Here is a 341-residue protein sequence, read N- to C-terminus: Ketol-acid reductoisomerase (NADP(+)) (341 aa).

Residues 1 to 181 (MARVYREGDI…GCARAGVLET (181 aa)) form the KARI N-terminal Rossmann domain. Residues 24-27 (FGSQ), serine 50, serine 52, and 82-85 (DERQ) contribute to the NADP(+) site. The active site involves histidine 107. NADP(+) is bound at residue glycine 133. A KARI C-terminal knotted domain is found at 182–327 (TFAEETETDL…AELRALAAEG (146 aa)). The Mg(2+) site is built by aspartate 190, glutamate 194, glutamate 226, and glutamate 230. Serine 251 contacts substrate.

Belongs to the ketol-acid reductoisomerase family. The cofactor is Mg(2+).

The enzyme catalyses (2R)-2,3-dihydroxy-3-methylbutanoate + NADP(+) = (2S)-2-acetolactate + NADPH + H(+). It carries out the reaction (2R,3R)-2,3-dihydroxy-3-methylpentanoate + NADP(+) = (S)-2-ethyl-2-hydroxy-3-oxobutanoate + NADPH + H(+). Its pathway is amino-acid biosynthesis; L-isoleucine biosynthesis; L-isoleucine from 2-oxobutanoate: step 2/4. The protein operates within amino-acid biosynthesis; L-valine biosynthesis; L-valine from pyruvate: step 2/4. Its function is as follows. Involved in the biosynthesis of branched-chain amino acids (BCAA). Catalyzes an alkyl-migration followed by a ketol-acid reduction of (S)-2-acetolactate (S2AL) to yield (R)-2,3-dihydroxy-isovalerate. In the isomerase reaction, S2AL is rearranged via a Mg-dependent methyl migration to produce 3-hydroxy-3-methyl-2-ketobutyrate (HMKB). In the reductase reaction, this 2-ketoacid undergoes a metal-dependent reduction by NADPH to yield (R)-2,3-dihydroxy-isovalerate. This is Ketol-acid reductoisomerase (NADP(+)) from Rubrobacter xylanophilus (strain DSM 9941 / JCM 11954 / NBRC 16129 / PRD-1).